An 85-amino-acid chain; its full sequence is Cell division topological specificity factor (85 aa).

It belongs to the MinE family.

Its function is as follows. Prevents the cell division inhibition by proteins MinC and MinD at internal division sites while permitting inhibition at polar sites. This ensures cell division at the proper site by restricting the formation of a division septum at the midpoint of the long axis of the cell. This Xanthomonas euvesicatoria pv. vesicatoria (strain 85-10) (Xanthomonas campestris pv. vesicatoria) protein is Cell division topological specificity factor.